The sequence spans 184 residues: Pupal cuticle protein (184 aa).

An N-terminal signal peptide occupies residues 1-15 (MYLLVNFIVALAVLQ). A Chitin-binding type R&amp;R domain is found at 42–103 (DGKYRYAYET…PVGAHIPQVP (62 aa)). Residues 147-160 (DHTIPQSRPSTTPK) are compositionally biased toward polar residues. The disordered stretch occupies residues 147–184 (DHTIPQSRPSTTPKTIYLTHPPTTTSRPLRQRRALPTH). Residues 175–184 (LRQRRALPTH) are compositionally biased toward basic residues.

Functionally, component of the cuticle of the pupa of fruit fly. The sequence is that of Pupal cuticle protein (Pcp) from Drosophila melanogaster (Fruit fly).